A 237-amino-acid chain; its full sequence is MRSRKLAGGVRSSARLRARSCSAASASAQDTHVTTSAQTACQTPSSHKATDRRTSKKFKYDKGHIVKSELQKHRSDSAATPSETPGTHEPLASAEDGASLLGKEAGGSTPQGTAGPLPGRCGTESDASPAETENEPLPPRHGAPVGGESNGGCPARDGAALDLEQGPGAPLLMDGSALLDDDSNQPMPVSRFFGNVELMQDLPPVSSSCPSMSRREFRKMHFRAKDDEEDDADGAET.

Residues 1-187 (MRSRKLAGGV…LLDDDSNQPM (187 aa)) are disordered. A compositionally biased stretch (low complexity) spans 11–28 (RSSARLRARSCSAASASA). Over residues 29–47 (QDTHVTTSAQTACQTPSSH) the composition is skewed to polar residues. Positions 48–76 (KATDRRTSKKFKYDKGHIVKSELQKHRSD) are enriched in basic and acidic residues. Residue Ser183 is modified to Phosphoserine.

The protein belongs to the UPF0688 family.

The protein resides in the nucleus. The polypeptide is UPF0688 protein C1orf174 homolog (Bos taurus (Bovine)).